Consider the following 761-residue polypeptide: Xaa-Pro dipeptidyl-peptidase (761 aa).

Active-site charge relay system residues include Ser347, Asp467, and His497.

The protein belongs to the peptidase S15 family. As to quaternary structure, homodimer.

Its subcellular location is the cytoplasm. The catalysed reaction is Hydrolyzes Xaa-Pro-|- bonds to release unblocked, N-terminal dipeptides from substrates including Ala-Pro-|-p-nitroanilide and (sequentially) Tyr-Pro-|-Phe-Pro-|-Gly-Pro-|-Ile.. Its function is as follows. Removes N-terminal dipeptides sequentially from polypeptides having unsubstituted N-termini provided that the penultimate residue is proline. This is Xaa-Pro dipeptidyl-peptidase from Streptococcus agalactiae serotype V (strain ATCC BAA-611 / 2603 V/R).